A 591-amino-acid chain; its full sequence is Probable translation initiation factor IF-2 (591 aa).

Residues 6-220 (IRTPIVCVMG…IMIGLAQRYM (215 aa)) enclose the tr-type G domain. A G1 region spans residues 15-22 (GHVDHGKT). A GTP-binding site is contributed by 15 to 22 (GHVDHGKT). Residues 40-44 (AITQH) are G2. The tract at residues 76–79 (DTPG) is G3. GTP contacts are provided by residues 76–80 (DTPGH) and 130–133 (TKVD). A G4 region spans residues 130-133 (TKVD). The segment at 198–200 (SAH) is G5.

The protein belongs to the TRAFAC class translation factor GTPase superfamily. Classic translation factor GTPase family. IF-2 subfamily.

In terms of biological role, function in general translation initiation by promoting the binding of the formylmethionine-tRNA to ribosomes. Seems to function along with eIF-2. This is Probable translation initiation factor IF-2 from Methanoregula boonei (strain DSM 21154 / JCM 14090 / 6A8).